Here is a 564-residue protein sequence, read N- to C-terminus: M protein, serotype 12 (564 aa).

The first 41 residues, 1–41, serve as a signal peptide directing secretion; sequence MAKNTTNRHYSLRKLKTGTASVAVALTVVGAGLVAGQTVRA. The stretch at 44–505 forms a coiled coil; that stretch reads SDLVAEKQRL…RAGKASDSQT (462 aa). C repeat units lie at residues 285–319, 327–361, 363–397, and 405–439; these read KQLE…EAEL, AKVT…VEAA, KQLE…EKDL, and DKVK…EKAL. Disordered stretches follow at residues 372 to 391 and 404 to 438; these read SEAS…EAKK and LDKV…VEKA. 2 stretches are compositionally biased toward basic and acidic residues: residues 404–413 and 421–438; these read LDKVKEEKQI and LRRD…VEKA. 4 D repeats span residues 472–477, 478–483, 486–491, and 493–498; these read AKLEAE, AKALKE, AKQAEE, and AKLRAG. The segment at 493-550 is disordered; that stretch reads AKLRAGKASDSQTPDAKPGNKAVPGKGQAPQAGTKPNQNKAPMKETKRQLPSTGETAN. The LPXTG sorting signal motif lies at 542 to 546; the sequence is LPSTG. Position 545 is a pentaglycyl murein peptidoglycan amidated threonine (T545). Residues 546 to 564 constitute a propeptide, removed by sortase; the sequence is GETANPFFTAAALTVMAAA.

Belongs to the M protein family.

The protein resides in the secreted. Its subcellular location is the cell wall. This protein is one of the different antigenic serotypes of protein M. Protein M is closely associated with virulence of the bacterium and can render the organism resistant to phagocytosis. This is M protein, serotype 12 (emm12) from Streptococcus pyogenes.